Here is an 80-residue protein sequence, read N- to C-terminus: DNA-directed RNA polymerase RPB10 homolog (80 aa).

4 residues coordinate Zn(2+): Cys7, Cys10, Cys65, and Cys66.

Belongs to the archaeal RpoN/eukaryotic RPB10 RNA polymerase subunit family. Part of the viral DNA-directed RNA polymerase that consists of 8 polII-like subunits (RPB1, RPB2, RPB3, RPB5, RPB6, RPB7, RPB9, RPB10), a capping enzyme and a termination factor.

It localises to the host cytoplasm. Functionally, component of the DNA-directed RNA polymerase (RNAP) that catalyzes the transcription in the cytoplasm of viral DNA into RNA using the four ribonucleoside triphosphates as substrates. In African swine fever virus (isolate Pig/Kenya/KEN-50/1950) (ASFV), this protein is DNA-directed RNA polymerase RPB10 homolog.